The following is a 514-amino-acid chain: Light-independent protochlorophyllide reductase subunit B (514 aa).

[4Fe-4S] cluster is bound at residue aspartate 36. The active-site Proton donor is the aspartate 300. 435 to 436 provides a ligand contact to substrate; the sequence is GM.

It belongs to the ChlB/BchB/BchZ family. In terms of assembly, protochlorophyllide reductase is composed of three subunits; ChlL, ChlN and ChlB. Forms a heterotetramer of two ChlB and two ChlN subunits. [4Fe-4S] cluster serves as cofactor.

The protein resides in the plastid. It is found in the chloroplast. The catalysed reaction is chlorophyllide a + oxidized 2[4Fe-4S]-[ferredoxin] + 2 ADP + 2 phosphate = protochlorophyllide a + reduced 2[4Fe-4S]-[ferredoxin] + 2 ATP + 2 H2O. The protein operates within porphyrin-containing compound metabolism; chlorophyll biosynthesis (light-independent). Component of the dark-operative protochlorophyllide reductase (DPOR) that uses Mg-ATP and reduced ferredoxin to reduce ring D of protochlorophyllide (Pchlide) to form chlorophyllide a (Chlide). This reaction is light-independent. The NB-protein (ChlN-ChlB) is the catalytic component of the complex. In Pleurastrum terricola (Filamentous green alga), this protein is Light-independent protochlorophyllide reductase subunit B.